Here is a 235-residue protein sequence, read N- to C-terminus: KNMITGAAQMDGAILVVSGADGPMPQTKEHILLAKQVGVPNIVVFLNKEDQVDDKELLELVELEVRETLDKYEFPGDEIPVIPGSALLALEALIENPKTQRGENPWVDKIYQLMDKVDSYIPTPQRETDKPFLLAVEDVLSITGRGTVATGRVERGTLKISDTVEFVGLKPTQSAVVTGLEMFKKTLDETLAGDNVGVLLRGVQKKDIERGMVIAKPGTITPHTKFEAQVYVLTK.

One can recognise a tr-type G domain in the interval 1 to 125 (KNMITGAAQM…KVDSYIPTPQ (125 aa)). 47–50 (NKED) provides a ligand contact to GTP.

It belongs to the TRAFAC class translation factor GTPase superfamily. Classic translation factor GTPase family. EF-Tu/EF-1A subfamily.

It localises to the plastid. It is found in the chloroplast. It catalyses the reaction GTP + H2O = GDP + phosphate + H(+). Functionally, GTP hydrolase that promotes the GTP-dependent binding of aminoacyl-tRNA to the A-site of ribosomes during protein biosynthesis. This chain is Elongation factor Tu, chloroplastic (tufA), found in Gonium pectorale (Green alga).